We begin with the raw amino-acid sequence, 129 residues long: Small ribosomal subunit protein uS12 (129 aa).

Position 89 is a 3-methylthioaspartic acid (Asp-89). The segment at 101 to 129 (SLDTSGVADRKQSRSKYGAKQPKAGAAKK) is disordered. Residues 116–129 (KYGAKQPKAGAAKK) are compositionally biased toward low complexity.

This sequence belongs to the universal ribosomal protein uS12 family. Part of the 30S ribosomal subunit. Contacts proteins S8 and S17. May interact with IF1 in the 30S initiation complex.

Its function is as follows. With S4 and S5 plays an important role in translational accuracy. In terms of biological role, interacts with and stabilizes bases of the 16S rRNA that are involved in tRNA selection in the A site and with the mRNA backbone. Located at the interface of the 30S and 50S subunits, it traverses the body of the 30S subunit contacting proteins on the other side and probably holding the rRNA structure together. The combined cluster of proteins S8, S12 and S17 appears to hold together the shoulder and platform of the 30S subunit. This Chlorobaculum parvum (strain DSM 263 / NCIMB 8327) (Chlorobium vibrioforme subsp. thiosulfatophilum) protein is Small ribosomal subunit protein uS12.